A 530-amino-acid chain; its full sequence is Zinc finger protein ZIC 4 (530 aa).

2 stretches are compositionally biased toward basic residues: residues 31–40 (HHPHHHHHPP) and 97–113 (NPHHRHHHHHHHHHHMA). 2 disordered regions span residues 31–50 (HHPHHHHHPPHLPQSVTGYP) and 87–138 (PGAL…SYSS). Residues 284–317 (LICKWIEEDQLPKKLCSKTFSTMHELVTHVTVEH) form a C2H2-type 1; atypical zinc finger. The segment at 326–353 (HICFWEECPREGKPFKAKYKLVNHIRVH) adopts a C2H2-type 2; atypical zinc-finger fold. 3 C2H2-type zinc fingers span residues 359–383 (FPCPFPGCGKVFARSENLKIHKRTH), 389–413 (FKCEFEGCDRRFANSSDRKKHSHVH), and 419–443 (YNCKVRGCDKSYTHPSSLRKHMKVH). The tract at residues 432-530 (HPSSLRKHMK…YSNWQATNTF (99 aa)) is disordered. The span at 435–444 (SLRKHMKVHC) shows a compositional bias: basic residues. Composition is skewed to low complexity over residues 455–467 (SSIPSLVSPSSDS) and 474–485 (TSSQPEPPTSSQ). Over residues 520–530 (SYSNWQATNTF) the composition is skewed to polar residues.

The protein belongs to the GLI C2H2-type zinc-finger protein family. At mid-gastrula stage (stage 11.5), weakly expressed in the prospective neural fold. Expressed in the neural plate border region at early neurula stage (stage 15) with strongest expression in the prospective regions of the hyoid and branchial crests. Expression in the dorsal central nervous system (CNS) continues through late neurula stage and early tail bud stages with expression strongest in the olfactory placode and expression levels increasing as development progresses. Becomes expressed in somites.

Its subcellular location is the nucleus. In terms of biological role, may bind to DNA. Induces neural and neural crest differentiation. Does not induce anterior neural tissue. The protein is Zinc finger protein ZIC 4 (zic4) of Xenopus laevis (African clawed frog).